A 269-amino-acid polypeptide reads, in one-letter code: Monofunctional glycosyltransferase (269 aa).

Residues I46–T66 form a helical membrane-spanning segment.

Belongs to the glycosyltransferase 51 family.

Its subcellular location is the cell membrane. It catalyses the reaction [GlcNAc-(1-&gt;4)-Mur2Ac(oyl-L-Ala-gamma-D-Glu-L-Lys-D-Ala-D-Ala)](n)-di-trans,octa-cis-undecaprenyl diphosphate + beta-D-GlcNAc-(1-&gt;4)-Mur2Ac(oyl-L-Ala-gamma-D-Glu-L-Lys-D-Ala-D-Ala)-di-trans,octa-cis-undecaprenyl diphosphate = [GlcNAc-(1-&gt;4)-Mur2Ac(oyl-L-Ala-gamma-D-Glu-L-Lys-D-Ala-D-Ala)](n+1)-di-trans,octa-cis-undecaprenyl diphosphate + di-trans,octa-cis-undecaprenyl diphosphate + H(+). Its pathway is cell wall biogenesis; peptidoglycan biosynthesis. Peptidoglycan polymerase that catalyzes glycan chain elongation using lipid-linked disaccharide-pentapeptide as the substrate. In Staphylococcus aureus (strain Newman), this protein is Monofunctional glycosyltransferase.